We begin with the raw amino-acid sequence, 145 residues long: Deoxyuridine 5'-triphosphate nucleotidohydrolase (145 aa).

Substrate is bound by residues 63 to 65 (RSG), Asn-76, and 80 to 82 (TID).

Belongs to the dUTPase family. Mg(2+) is required as a cofactor.

The enzyme catalyses dUTP + H2O = dUMP + diphosphate + H(+). The protein operates within pyrimidine metabolism; dUMP biosynthesis; dUMP from dCTP (dUTP route): step 2/2. This enzyme is involved in nucleotide metabolism: it produces dUMP, the immediate precursor of thymidine nucleotides and it decreases the intracellular concentration of dUTP so that uracil cannot be incorporated into DNA. This Chlamydia pneumoniae (Chlamydophila pneumoniae) protein is Deoxyuridine 5'-triphosphate nucleotidohydrolase.